Here is a 101-residue protein sequence, read N- to C-terminus: Small ribosomal subunit protein uS14 (101 aa).

This sequence belongs to the universal ribosomal protein uS14 family. Part of the 30S ribosomal subunit. Contacts proteins S3 and S10.

Binds 16S rRNA, required for the assembly of 30S particles and may also be responsible for determining the conformation of the 16S rRNA at the A site. The chain is Small ribosomal subunit protein uS14 from Idiomarina loihiensis (strain ATCC BAA-735 / DSM 15497 / L2-TR).